The primary structure comprises 198 residues: Small ribosomal subunit protein uS7 (198 aa).

It belongs to the universal ribosomal protein uS7 family. Part of the 30S ribosomal subunit.

Functionally, one of the primary rRNA binding proteins, it binds directly to 16S rRNA where it nucleates assembly of the head domain of the 30S subunit. Is located at the subunit interface close to the decoding center. This Desulfurococcus amylolyticus (strain DSM 18924 / JCM 16383 / VKM B-2413 / 1221n) (Desulfurococcus kamchatkensis) protein is Small ribosomal subunit protein uS7.